The following is a 175-amino-acid chain: Transcriptional repressor NrdR (175 aa).

A zinc finger lies at 3–34; that stretch reads CPICQDTNSRVLESRSAESGKSIRRRRECMNC. Positions 49–139 constitute an ATP-cone domain; it reads ITIIKRDGKK…VYRKFQGIRD (91 aa).

Belongs to the NrdR family. Requires Zn(2+) as cofactor.

Its function is as follows. Negatively regulates transcription of bacterial ribonucleotide reductase nrd genes and operons by binding to NrdR-boxes. In Trichodesmium erythraeum (strain IMS101), this protein is Transcriptional repressor NrdR.